Consider the following 185-residue polypeptide: Threonylcarbamoyl-AMP synthase (185 aa).

Positions 4 to 185 (SWRVQQAAQD…IATAQIVRAG (182 aa)) constitute a YrdC-like domain.

Belongs to the SUA5 family. TsaC subfamily.

It is found in the cytoplasm. It catalyses the reaction L-threonine + hydrogencarbonate + ATP = L-threonylcarbamoyladenylate + diphosphate + H2O. Functionally, required for the formation of a threonylcarbamoyl group on adenosine at position 37 (t(6)A37) in tRNAs that read codons beginning with adenine. Catalyzes the conversion of L-threonine, HCO(3)(-)/CO(2) and ATP to give threonylcarbamoyl-AMP (TC-AMP) as the acyladenylate intermediate, with the release of diphosphate. This Pseudomonas syringae pv. syringae (strain B728a) protein is Threonylcarbamoyl-AMP synthase.